The sequence spans 479 residues: Small ribosomal subunit protein bS1 (479 aa).

S1 motif domains follow at residues G36–K105, D123–R188, G209–K277, and G294–K363. The tract at residues T429–A466 is disordered. A compositionally biased stretch (low complexity) spans A437–G460.

The protein belongs to the bacterial ribosomal protein bS1 family. In terms of assembly, binds uncharacterized protein MSMEG_2731/MSMEI_2664.

Its function is as follows. Binds mRNA, facilitating recognition of most mRNAs by the 30S ribosomal subunit during translation initiation. Plays a role in trans-translation; binds tmRNA (the product of the ssrA gene). Binds very poorly to pyrazinoic acid (POA), the active form of the prodrug pyrazinamide (PZA); POA does not disrupt trans-translation in this organism. M.smegmatis is resistant to the antibiotic PZA. In trans-translation Ala-aminoacylated transfer-messenger RNA (tmRNA, product of the ssrA gene; the 2 termini fold to resemble tRNA(Ala) while it encodes a short internal open reading frame (the tag peptide)) acts like a tRNA, entering the A-site of the ribosome and displacing the stalled mRNA (which is subsequently degraded). The ribosome then switches to translate the ORF on the tmRNA, the nascent peptide is terminated with the 'tag peptide' encoded by the tmRNA and thus targeted for degradation. This is Small ribosomal subunit protein bS1 (rpsA) from Mycolicibacterium smegmatis (strain ATCC 700084 / mc(2)155) (Mycobacterium smegmatis).